A 347-amino-acid polypeptide reads, in one-letter code: NADH-ubiquinone oxidoreductase chain 2 (347 aa).

Transmembrane regions (helical) follow at residues 1–21 (MTPM…TLTL), 26–46 (WLLM…LLTY), 56–76 (AIKY…AASL), 96–116 (GIMT…YWVP), 153–171 (ILLT…NGLN), 178–198 (VMAY…IYFP), 199–219 (TLTT…FTVF), 237–257 (APIM…LPPL), 277–297 (IMAT…MRII), and 326–346 (LPTL…FITL).

Belongs to the complex I subunit 2 family. As to quaternary structure, core subunit of respiratory chain NADH dehydrogenase (Complex I) which is composed of 45 different subunits. Interacts with TMEM242.

The protein resides in the mitochondrion inner membrane. The enzyme catalyses a ubiquinone + NADH + 5 H(+)(in) = a ubiquinol + NAD(+) + 4 H(+)(out). Functionally, core subunit of the mitochondrial membrane respiratory chain NADH dehydrogenase (Complex I) which catalyzes electron transfer from NADH through the respiratory chain, using ubiquinone as an electron acceptor. Essential for the catalytic activity and assembly of complex I. In Ornithorhynchus anatinus (Duckbill platypus), this protein is NADH-ubiquinone oxidoreductase chain 2.